We begin with the raw amino-acid sequence, 433 residues long: Serine/threonine-protein phosphatase 2A activator 2 (433 aa).

Pro residues predominate over residues 1-10 (MTSQAPPQPA). Disordered regions lie at residues 1-67 (MTSQ…NWTF) and 367-400 (SMSE…GTGW). Over residues 11–23 (SSPGVAAPAAASS) the composition is skewed to low complexity. The span at 45–59 (NPTPIPETPALPTPP) shows a compositional bias: pro residues. The span at 367 to 382 (SMSEDTGAGDEADVED) shows a compositional bias: acidic residues. Residues 383-396 (DPHAGHDHTGKAHD) are compositionally biased toward basic and acidic residues.

The protein belongs to the PTPA-type PPIase family.

The protein resides in the cytoplasm. It carries out the reaction [protein]-peptidylproline (omega=180) = [protein]-peptidylproline (omega=0). Its function is as follows. PPIases accelerate the folding of proteins. It catalyzes the cis-trans isomerization of proline imidic peptide bonds in oligopeptides. Acts as a regulatory subunit for PP2A-like phosphatases modulating their activity or substrate specificity, probably by inducing a conformational change in the catalytic subunit, a direct target of the PPIase. Can reactivate inactive phosphatase PP2A-phosphatase methylesterase complexes (PP2Ai) in presence of ATP and Mg(2+) by dissociating the inactive form from the complex. The sequence is that of Serine/threonine-protein phosphatase 2A activator 2 (RRD2) from Gibberella zeae (strain ATCC MYA-4620 / CBS 123657 / FGSC 9075 / NRRL 31084 / PH-1) (Wheat head blight fungus).